Consider the following 813-residue polypeptide: MAEEEKIRQTIQELPLLPLRGIIVFPYMVMHLDVGRERSVNAIEEAMAQDRIIFLATQKEAQTDQPGAEDIYQIGVIAEIKQLLKLPGGTIRVLVEGLARAEILEYIDMEPLIRVRVREHIEPDVKSNAVEALMRSLINQFEQYVKISKKIPPETFVSVVAVEDPGRLTDTISSHLTLKTQDKQRILEALDVTERLEILTEILAREMEILELERKINVRVRKQMEKTQKEYYLREQIKAIQKELGEKEDRQAEGEDLRNKIAKAKLPKEVEEKALREVERLEKMPPMVAEATVVRNYLDWLLALPWAKQTKDRLDIDKAEAILNEDHFGLDKVKERIIEYLAIRKLAQKMKGPIICFVGPPGVGKTSLARSIARALERKFVRLSLGGVRDEAEIRGHRRTYVGAMPGRLIQGLRTAGSKNPVFLLDEIDKMSMDFRGDPASALLEVLDPEQNSTFSDHFIEVPFDLSKVLFITTANGMHNIPRPLLDRMEVIYIPGYTEEEKTRIALDHLVPKQLKEHGLKKEQVQISENTVRRLIREYTREAGVRNLEREIASLCRKSARAIVKNPERRLSISAGNLPSYLGIPRFRYGLAEAESQVGVATGLAWTETGGDTLAIEVAHMPGKGNLALTGKLGDVMKESAQASLTYVRSRARELGIADNFHQNTDIHIHVPEGAIPKDGPSAGITIATALTSALSRRPVRREVAMTGEITLRGRVLPVGGIKEKMLAANRAGCTTVILPAENKKDLEEVPANVKKKLRFVLVEHMDQVIREALLEPVPVQAPEPPETIPAAIETSVPVYQGMLEETPPGLQT.

Residues 14–207 (LPLLPLRGII…ILTEILAREM (194 aa)) form the Lon N-terminal domain. ATP is bound at residue 359-366 (GPPGVGKT). Positions 595–776 (ESQVGVATGL…DQVIREALLE (182 aa)) constitute a Lon proteolytic domain. Residues Ser682 and Lys725 contribute to the active site.

It belongs to the peptidase S16 family. In terms of assembly, homohexamer. Organized in a ring with a central cavity.

The protein resides in the cytoplasm. It catalyses the reaction Hydrolysis of proteins in presence of ATP.. Its function is as follows. ATP-dependent serine protease that mediates the selective degradation of mutant and abnormal proteins as well as certain short-lived regulatory proteins. Required for cellular homeostasis and for survival from DNA damage and developmental changes induced by stress. Degrades polypeptides processively to yield small peptide fragments that are 5 to 10 amino acids long. Binds to DNA in a double-stranded, site-specific manner. The chain is Lon protease from Heliobacterium modesticaldum (strain ATCC 51547 / Ice1).